The chain runs to 687 residues: Glycine--tRNA ligase beta subunit (687 aa).

It belongs to the class-II aminoacyl-tRNA synthetase family. Tetramer of two alpha and two beta subunits.

It localises to the cytoplasm. The enzyme catalyses tRNA(Gly) + glycine + ATP = glycyl-tRNA(Gly) + AMP + diphosphate. The protein is Glycine--tRNA ligase beta subunit of Neisseria gonorrhoeae (strain ATCC 700825 / FA 1090).